We begin with the raw amino-acid sequence, 450 residues long: UDP-N-acetylmuramoylalanine--D-glutamate ligase (450 aa).

119–125 (GSNGKTT) lines the ATP pocket.

It belongs to the MurCDEF family.

The protein resides in the cytoplasm. The enzyme catalyses UDP-N-acetyl-alpha-D-muramoyl-L-alanine + D-glutamate + ATP = UDP-N-acetyl-alpha-D-muramoyl-L-alanyl-D-glutamate + ADP + phosphate + H(+). The protein operates within cell wall biogenesis; peptidoglycan biosynthesis. In terms of biological role, cell wall formation. Catalyzes the addition of glutamate to the nucleotide precursor UDP-N-acetylmuramoyl-L-alanine (UMA). The sequence is that of UDP-N-acetylmuramoylalanine--D-glutamate ligase from Streptococcus pneumoniae (strain P1031).